The primary structure comprises 156 residues: Phosphopantetheine adenylyltransferase (156 aa).

A substrate-binding site is contributed by threonine 9. Residues 9 to 10 and histidine 17 contribute to the ATP site; that span reads TF. Lysine 41, leucine 73, and arginine 87 together coordinate substrate. ATP-binding positions include 88–90, glutamate 98, and 123–129; these read GVR and WVFVSST.

Belongs to the bacterial CoaD family. As to quaternary structure, homohexamer. The cofactor is Mg(2+).

It is found in the cytoplasm. The catalysed reaction is (R)-4'-phosphopantetheine + ATP + H(+) = 3'-dephospho-CoA + diphosphate. It participates in cofactor biosynthesis; coenzyme A biosynthesis; CoA from (R)-pantothenate: step 4/5. Its function is as follows. Reversibly transfers an adenylyl group from ATP to 4'-phosphopantetheine, yielding dephospho-CoA (dPCoA) and pyrophosphate. The sequence is that of Phosphopantetheine adenylyltransferase from Haemophilus influenzae (strain PittEE).